Reading from the N-terminus, the 205-residue chain is Imidazole glycerol phosphate synthase subunit HisH (205 aa).

A Glutamine amidotransferase type-1 domain is found at 3-205 (KIGLIDYGMG…LLRRWIKSIQ (203 aa)). Catalysis depends on Cys-81, which acts as the Nucleophile. Residues His-185 and Glu-187 contribute to the active site.

Heterodimer of HisH and HisF.

It localises to the cytoplasm. It catalyses the reaction 5-[(5-phospho-1-deoxy-D-ribulos-1-ylimino)methylamino]-1-(5-phospho-beta-D-ribosyl)imidazole-4-carboxamide + L-glutamine = D-erythro-1-(imidazol-4-yl)glycerol 3-phosphate + 5-amino-1-(5-phospho-beta-D-ribosyl)imidazole-4-carboxamide + L-glutamate + H(+). The catalysed reaction is L-glutamine + H2O = L-glutamate + NH4(+). Its pathway is amino-acid biosynthesis; L-histidine biosynthesis; L-histidine from 5-phospho-alpha-D-ribose 1-diphosphate: step 5/9. Its function is as follows. IGPS catalyzes the conversion of PRFAR and glutamine to IGP, AICAR and glutamate. The HisH subunit catalyzes the hydrolysis of glutamine to glutamate and ammonia as part of the synthesis of IGP and AICAR. The resulting ammonia molecule is channeled to the active site of HisF. This Prochlorococcus marinus subsp. pastoris (strain CCMP1986 / NIES-2087 / MED4) protein is Imidazole glycerol phosphate synthase subunit HisH.